A 594-amino-acid chain; its full sequence is DNA polymerase epsilon subunit B (594 aa).

This sequence belongs to the DNA polymerase epsilon subunit B family. Heterotetramer. Consists of four subunits: pol2, dpb2, dpb3 and dpb4. Interacts with dpb3.

Its subcellular location is the nucleus. In terms of biological role, as accessory component of the DNA polymerase epsilon (DNA polymerase II) participates in chromosomal DNA replication. The sequence is that of DNA polymerase epsilon subunit B (dpb2) from Schizosaccharomyces pombe (strain 972 / ATCC 24843) (Fission yeast).